The primary structure comprises 197 residues: 7-methyl-GTP pyrophosphatase (197 aa).

Residue aspartate 73 is the Proton acceptor of the active site.

Belongs to the Maf family. YceF subfamily. A divalent metal cation is required as a cofactor.

The protein localises to the cytoplasm. The catalysed reaction is N(7)-methyl-GTP + H2O = N(7)-methyl-GMP + diphosphate + H(+). Functionally, nucleoside triphosphate pyrophosphatase that hydrolyzes 7-methyl-GTP (m(7)GTP). May have a dual role in cell division arrest and in preventing the incorporation of modified nucleotides into cellular nucleic acids. The polypeptide is 7-methyl-GTP pyrophosphatase (Alcanivorax borkumensis (strain ATCC 700651 / DSM 11573 / NCIMB 13689 / SK2)).